We begin with the raw amino-acid sequence, 143 residues long: Large ribosomal subunit protein uL15 (143 aa).

Basic residues predominate over residues methionine 1–glycine 13. Residues methionine 1–glycine 39 are disordered. The segment covering glycine 29–glycine 38 has biased composition (gly residues).

This sequence belongs to the universal ribosomal protein uL15 family. As to quaternary structure, part of the 50S ribosomal subunit.

In terms of biological role, binds to the 23S rRNA. The chain is Large ribosomal subunit protein uL15 from Methanocaldococcus jannaschii (strain ATCC 43067 / DSM 2661 / JAL-1 / JCM 10045 / NBRC 100440) (Methanococcus jannaschii).